We begin with the raw amino-acid sequence, 670 residues long: MSLELKEKESELPFDEQIINDKWRSKYTPIDAYFKFHRQTVENLESFWESVAKELEWFKPWDKVLDASNPPFYKWFVGGRLNLSYLAVDRHVKTWRKNKLAIEWEGEPVDENGYPTDRRKLTYYDLYREVNRVAYMLKQNFGVKKGDKITLYLPMVPELPITMLAAWRIGAITSVVFSGFSADALAERINDSQSRIVITADGFWRRGRVVRLKEVVDAALEKATGVESVIVLPRLGLKDVPMTEGRDYWWNKLMQGIPPNAYIEPEPVESEHPSFILYTSGTTGKPKGIVHDTGGWAVHVYATMKWVFDIRDDDIFWCTADIGWVTGHSYVVLGPLLMGATEVIYEGAPDYPQPDRWWSIIERYGVTIFYTSPTAIRMFMRYGEEWPRKHDLSTLRIIHSVGEPINPEAWRWAYRVLGNEKVAFGSTWWMTETGGIVISHAPGLYLVPMKPGTNGPPLPGFEVDVVDENGNPAPPGVKGYLVIKKPWPGMLHGIWGDPERYIKTYWSRFPGMFYAGDYAIKDKDGYIWVLGRADEVIKVAGHRLGTYELESALISHPAVAESAVVGVPDAIKGEVPIAFVVLKQGVAPSDELRKELREHVRRTIGPIAEPAQIFFVTKLPKTRSGKIMRRLLKAVATGAPLGDVTTLEDETSVEEAKRAYEEIKAEMART.

CoA is bound by residues 205-208 (RRGR) and Thr326. Residues 402–404 (GEP), 426–431 (STWWMT), Asp517, Arg532, and Arg543 contribute to the ATP site. Residues His556 and Val559 each coordinate Mg(2+). A CoA-binding site is contributed by Arg601. The residue at position 626 (Lys626) is an N6-acetyllysine.

This sequence belongs to the ATP-dependent AMP-binding enzyme family. Requires Mg(2+) as cofactor. In terms of processing, acetylated. Deacetylation by the SIR2-homolog deacetylase activates the enzyme.

The enzyme catalyses acetate + ATP + CoA = acetyl-CoA + AMP + diphosphate. Catalyzes the conversion of acetate into acetyl-CoA (AcCoA), an essential intermediate at the junction of anabolic and catabolic pathways. AcsA undergoes a two-step reaction. In the first half reaction, AcsA combines acetate with ATP to form acetyl-adenylate (AcAMP) intermediate. In the second half reaction, it can then transfer the acetyl group from AcAMP to the sulfhydryl group of CoA, forming the product AcCoA. This is Acetyl-coenzyme A synthetase from Pyrobaculum aerophilum (strain ATCC 51768 / DSM 7523 / JCM 9630 / CIP 104966 / NBRC 100827 / IM2).